A 572-amino-acid chain; its full sequence is Probable transporter MCH1 (572 aa).

The segment covering 1 to 29 (MSSSAPDDTQASRLDADQISTRSSSYASD) has biased composition (polar residues). A disordered region spans residues 1 to 39 (MSSSAPDDTQASRLDADQISTRSSSYASDNDTDSTETRI). Residue asparagine 30 is glycosylated (N-linked (GlcNAc...) asparagine). The next 10 helical transmembrane spans lie at 50–70 (LLAFISANIIALACGSIVVFS), 89–109 (AVAISGSVALYLPISGVGYIC), 116–136 (PLALTGGILFGSGYGLAAGVY), 159–179 (FLMLSFVFVGVATCCLYMAAV), 193–213 (GLALATPITCFGLSPMWLSQA), 232–252 (VFRFFLFLAALTFFMGILGTF), 335–355 (LAFLLIVGPGEAFINNLGTII), 426–446 (FMAFFASMLSIGLLILASGLV), 459–479 (LVGAGYGAIFSLTPLMVTIIW), and 488–508 (YGLIGMLPAAGSTFWGLVYSA). Asparagine 515 is a glycosylation site (N-linked (GlcNAc...) asparagine). A helical membrane pass occupies residues 539 to 559 (PTYWAETITVWIAVGLLLWAW).

It belongs to the major facilitator superfamily.

Its subcellular location is the vacuole membrane. In terms of biological role, probable transporter. In Gibberella zeae (strain ATCC MYA-4620 / CBS 123657 / FGSC 9075 / NRRL 31084 / PH-1) (Wheat head blight fungus), this protein is Probable transporter MCH1 (MCH1).